Consider the following 343-residue polypeptide: MVADEEVRVRAEAWNNAFGYIKPTAVATAVELGLPDILENHDGPMSLLELSAATDCPAEPLHRLMRFLVFHGIFKKTAKPPLSNEAVYYARTALSRLFTRDELGDFMLLQTGPLSQHPAGLTASSLRTGKPQFIRSVNGEDSWTDPVNGYHMKVFSDAMAAHARETTAAIVRYCPAAFEGIGTVVDVGGRHGVALEKLVAAFPWVRGISFDLPEIVAKAPPRPGIEFVGGSFFESVPKGDLVLLMWILHDWSDESCIEIMKKCKEAIPTSGKVMIVDAIVDEDGEGDDFAGARLSLDLIMMAVLARGKERTYREWEYLLREAGFTKFVVKNINTVEFVIEAYP.

D211 is a binding site for S-adenosyl-L-methionine. H249 (proton acceptor) is an active-site residue.

The protein belongs to the class I-like SAM-binding methyltransferase superfamily. Cation-independent O-methyltransferase family. In terms of assembly, homodimer.

The enzyme catalyses apigenin + S-adenosyl-L-methionine = acacetin + S-adenosyl-L-homocysteine + H(+). The catalysed reaction is kaempferol + S-adenosyl-L-methionine = kaempferide + S-adenosyl-L-homocysteine + H(+). It carries out the reaction isorhamnetin + S-adenosyl-L-methionine = 3',4'-O-dimethylquercetin + S-adenosyl-L-homocysteine + 2 H(+). It catalyses the reaction scutellarein + S-adenosyl-L-methionine = scutellarein 4'-methyl ether + S-adenosyl-L-homocysteine + H(+). The enzyme catalyses (2S)-naringenin + S-adenosyl-L-methionine = (2S)-naringenin 4'-methyl ether + S-adenosyl-L-homocysteine + H(+). The catalysed reaction is 4',7,8-trihydroxyflavone + S-adenosyl-L-methionine = 7,8-dihydroxy-4'-methoxyflavone + S-adenosyl-L-homocysteine + H(+). It carries out the reaction taxifolin + S-adenosyl-L-methionine = taxifolin 4'-methyl ether + S-adenosyl-L-homocysteine + H(+). It participates in flavonoid metabolism. In terms of biological role, flavonoid 4'-O-methyltransferase involved in the biosynthesis of polymethoxylated flavonoids natural products such as pebrellin, aroma compounds which contribute to the flavor of peppermint, and exhibit pharmacological activities such as anti-allergic, anti-oxidant, antibacterial, anti-proliferative, and anti-inflammatory effects. Catalyzes S-adenosylmethionine-dependent regioselective 4'-O-methylation of flavonoids; active on various hydroxylated flavonoid substrates, including isorhamnetin, kaempferol, apigenin (API), scutellarein (6-hydroxy-apigenin, 6-OH-API, SCU), taxifolin, 7,8,4'-trihydroxy-flavone and naringenin (NAR), and, with a lower efficiency, quercetin, rhamnetin, luteolin (LUT) and 7,8,3',4'-tetrahydroxy-flavone. The protein is Flavonoid 4'-O-methyltransferase 4 of Mentha piperita (Peppermint).